The chain runs to 419 residues: Subtilisin-like protease 2 (419 aa).

A signal peptide spans Met1–Gly16. Positions Asp17–Ala122 are excised as a propeptide. The Inhibitor I9 domain occupies Gln36–Ala122. The Peptidase S8 domain maps to Arg131 to Lys419. Residues Asp169 and His201 each act as charge relay system in the active site. Residues Asn248, Asn261, and Asn348 are each glycosylated (N-linked (GlcNAc...) asparagine). Catalysis depends on Ser357, which acts as the Charge relay system. The N-linked (GlcNAc...) asparagine glycan is linked to Asn388.

Belongs to the peptidase S8 family.

It localises to the secreted. Functionally, secreted subtilisin-like serine protease with keratinolytic activity that contributes to pathogenicity. This Trichophyton verrucosum (Cattle ringworm fungus) protein is Subtilisin-like protease 2 (SUB2).